Consider the following 69-residue polypeptide: Large ribosomal subunit protein uL29 (69 aa).

This sequence belongs to the universal ribosomal protein uL29 family.

This chain is Large ribosomal subunit protein uL29, found in Parasynechococcus marenigrum (strain WH8102).